Reading from the N-terminus, the 414-residue chain is Putative transporter AmpG 4 (414 aa).

12 consecutive transmembrane segments (helical) span residues 15–35 (IFIL…TLAV), 44–63 (IAVI…KVFW), 84–104 (WLIL…KENP), 109–129 (TSFY…DIAV), 150–170 (VFGY…LAEI), 177–197 (LTFC…ITVN), 230–250 (FAVT…MLGA), 268–288 (IIAK…GGIV), 295–315 (FKGL…FIWL), 324–344 (ALLI…TALV), 360–379 (YALL…IYAG), and 389–409 (GFFL…MYLN).

It belongs to the major facilitator superfamily.

It localises to the cell inner membrane. This chain is Putative transporter AmpG 4 (ampG4), found in Rickettsia conorii (strain ATCC VR-613 / Malish 7).